A 373-amino-acid polypeptide reads, in one-letter code: C-C chemokine receptor type 2 (373 aa).

The Extracellular segment spans residues 1–60 (MEDSNMLPQFIHGILSTSHSLFPRSIQELDEGATTPYDYDDGEPCHKTSVKQIGAWILPP). Residues 61–81 (LYSLVFIFGFVGNMLVIIILI) traverse the membrane as a helical segment. Residues 82 to 91 (SCKKLKSMTD) are Cytoplasmic-facing. Residues 92 to 112 (IYLFNLAISDLLFLLTLPFWA) traverse the membrane as a helical segment. Over 113 to 128 (HYAANEWVFGNIMCKL) the chain is Extracellular. A disulfide bond links cysteine 126 and cysteine 203. Residues 129 to 149 (FTGLYHIGYFGGIFFIILLTI) traverse the membrane as a helical segment. At 150 to 170 (DRYLAIVHAVFALKARTVTFG) the chain is on the cytoplasmic side. The residue at position 152 (tyrosine 152) is a Phosphotyrosine; by JAK2. A helical transmembrane segment spans residues 171–191 (VITSVVTWVVAVFASLPGIIF). Residues 192–220 (TKSEQEDDQHTCGPYFPTIWKNFQTIMRN) are Extracellular-facing. The chain crosses the membrane as a helical span at residues 221-241 (ILSLILPLLVMVICYSGILHT). Over 242-256 (LFRCRNEKKRHRAVR) the chain is Cytoplasmic. A helical membrane pass occupies residues 257–277 (LIFAIMIVYFLFWTPYNIVLF). At 278–301 (LTTFQEFLGMSNCVVDMHLDQAMQ) the chain is on the extracellular side. The chain crosses the membrane as a helical span at residues 302-322 (VTETLGMTHCCVNPIIYAFVG). At 323-373 (EKFRRYLSIFFRKHIAKNLCKQCPVFYRETADRVSSTFTPSTGEQEVSVGL) the chain is on the cytoplasmic side.

This sequence belongs to the G-protein coupled receptor 1 family. In terms of assembly, interacts with ARRB1. Interacts (via extracellular N-terminal region) with beta-defensin DEFB106A/DEFB106B; this interaction may preferentially require specific tyrosine sulfation on CCR2. Interacts with NUP85; the interaction is required for CCR2 clusters formation on the cell membrane and CCR2 signaling. N-glycosylated. Post-translationally, sulfation increases the affinity for both monomeric and dimeric CCL2 with stronger binding to the monomeric form. Binding of sulfated CCR2 to CCL2 promotes conversion of CCL2 from dimer to monomer. As to expression, expressed in lung, spleen, kidney, thymus and macrophages.

Its subcellular location is the cell membrane. Its function is as follows. Key functional receptor for CCL2 but can also bind CCL7 and CCL12. Its binding with CCL2 on monocytes and macrophages mediates chemotaxis and migration induction through the activation of the PI3K cascade, the small G protein Rac and lamellipodium protrusion. Also acts as a receptor for the beta-defensin DEFB106A/DEFB106B. Regulates the expression of T-cell inflammatory cytokines and T-cell differentiation, promoting the differentiation of T-cells into T-helper 17 cells (Th17) during inflammation. Facilitates the export of mature thymocytes by enhancing directional movement of thymocytes to sphingosine-1-phosphate stimulation and up-regulation of S1P1R expression; signals through the JAK-STAT pathway to regulate FOXO1 activity leading to an increased expression of S1P1R. Plays an important role in mediating peripheral nerve injury-induced neuropathic pain. Increases NMDA-mediated synaptic transmission in both dopamine D1 and D2 receptor-containing neurons, which may be caused by MAPK/ERK-dependent phosphorylation of GRIN2B/NMDAR2B. Mediates the recruitment of macrophages and monocytes to the injury site following brain injury. This is C-C chemokine receptor type 2 (Ccr2) from Rattus norvegicus (Rat).